Here is a 201-residue protein sequence, read N- to C-terminus: L(+)-tartrate dehydratase subunit beta (201 aa).

His37 is a catalytic residue.

This sequence belongs to the class-I fumarase family. Heterotetramer of two alpha and two beta subunits.

The enzyme catalyses (2R,3R)-tartrate = oxaloacetate + H2O. In Shigella boydii serotype 4 (strain Sb227), this protein is L(+)-tartrate dehydratase subunit beta (ttdB).